We begin with the raw amino-acid sequence, 1010 residues long: Importin-8 (1010 aa).

Residues 22-102 (AETELNQSYK…RDNIVEGIIR (81 aa)) enclose the Importin N-terminal domain. Over residues 886 to 895 (NHSKAEKVDI) the composition is skewed to basic and acidic residues. Residues 886–932 (NHSKAEKVDIEENEEISSEEEEETSVSAQAMQSQIGRSEEEDDDDWD) form a disordered region. Residues 896 to 909 (EENEEISSEEEEET) show a composition bias toward acidic residues. Ser902 and Ser903 each carry phosphoserine. Over residues 910–921 (SVSAQAMQSQIG) the composition is skewed to polar residues.

Belongs to the importin beta family. As to quaternary structure, forms a heterodimer with KPNB1. Interacts with SRP19. Interacts with RPL23A. Binds directly to nuclear pore complexes. Interacts with LRPPRC; the interaction occurs when LRPPRC is in its RNA-free form and promotes import of LRPPRC to the nucleus to allow for EIF4E-mediated export of mRNAS from the nucleus to the cytoplasm.

The protein resides in the cytoplasm. Its subcellular location is the nucleus. In terms of biological role, involved in nuclear protein import, either by acting as autonomous nuclear transport receptor or as an adapter-like protein in association with the importin-beta subunit KPNB1. Acting autonomously, may serve as receptor for nuclear localization signals (NLS) and promote translocation of import substrates through the nuclear pore complex (NPC) by an energy requiring, Ran-dependent mechanism. At the nucleoplasmic side of the NPC, Ran binds to importin, the importin/substrate complex dissociates and importin is re-exported from the nucleus to the cytoplasm where GTP hydrolysis releases Ran. The directionality of nuclear import is thought to be conferred by an asymmetric distribution of the GTP- and GDP-bound forms of Ran between the cytoplasm and nucleus. In vitro mediates the nuclear import of the signal recognition particle protein SRP19. May also be involved in cytoplasm-to-nucleus shuttling of a broad spectrum of other cargos, including Argonaute-microRNAs complexes, the JUN protein, RELA/NF-kappa-B p65 subunit, the translation initiation factor EIF4E and a set of receptor-activated mothers against decapentaplegic homolog (SMAD) transcription factors that play a critical role downstream of the large family of transforming growth factor beta and bone morphogenetic protein (BMP) cytokines. In Mus musculus (Mouse), this protein is Importin-8.